Consider the following 662-residue polypeptide: High affinity sulfate transporter 2 (662 aa).

Positions methionine 1 to leucine 35 are disordered. Helical transmembrane passes span glycine 103–alanine 123, leucine 128–glycine 148, isoleucine 153–isoleucine 173, leucine 182–cysteine 202, glycine 205–isoleucine 225, tryptophan 264–alanine 284, phenylalanine 291–isoleucine 311, alanine 346–glycine 366, methionine 383–glycine 403, valine 420–phenylalanine 440, valine 447–leucine 467, and glycine 481–isoleucine 501. The 124-residue stretch at glutamine 532–tyrosine 655 folds into the STAS domain.

The protein belongs to the SLC26A/SulP transporter (TC 2.A.53) family.

The protein resides in the membrane. High-affinity H(+)/sulfate cotransporter that mediates the uptake of sulfate by plant roots from low concentrations of sulfate in the soil solution. This is High affinity sulfate transporter 2 (ST2) from Stylosanthes hamata (Caribbean stylo).